The sequence spans 816 residues: Coiled-coil and C2 domain-containing protein 1-like (816 aa).

Over residues 1-11 the composition is skewed to basic and acidic residues; the sequence is MFSRKKPEPAK. Disordered stretches follow at residues 1–135, 157–176, and 186–269; these read MFSR…TFLP, ANAK…RGLK, and AAGK…RQTD. Positions 25–47 are enriched in acidic residues; it reads IPDDFDPSAGYGEDDGGDSDLEA. The segment covering 73-85 has biased composition (basic and acidic residues); it reads DLDKMIADSLRDV. Acidic residues predominate over residues 86–100; it reads SDDDDDDNLESDPDL. The span at 122–131 shows a compositional bias: low complexity; it reads PPAASEEPVQ. Positions 145–200 are DM14 1; the sequence is IKQRLEMYKQAEANAKTAGDSGKARRFGRGLKTLKDLHRQAAAGKSINVDDIPPEV. Over residues 220 to 243 the composition is skewed to pro residues; the sequence is PSTPASPPPVPSRAAPDPPTPGTP. DM14 stretches follow at residues 265 to 317 and 365 to 419; these read SRQT…MPPP and LQQR…LPVP. The stretch at 355-382 forms a coiled coil; it reads LAAATNMLEALQQRLEKYQSVEAAAKAE. A disordered region spans residues 418 to 492; it reads VPPGFGPLPT…TRTSGNQQKN (75 aa). The span at 424–433 shows a compositional bias: low complexity; that stretch reads PLPTADAAPV. Positions 434-449 are enriched in pro residues; the sequence is APTPSLPTSPTSPPPT. Over residues 450 to 471 the composition is skewed to low complexity; it reads ASTSAGGTPSSSSATTPTAPRK. Over residues 483 to 492 the composition is skewed to polar residues; it reads TRTSGNQQKN. Positions 502–556 are DM14 4; that stretch reads LLERQKEFKLAAIEAKKAGEIDQAKEYLKIFKGFDSLLNAASSGLPVDLSTLPVP. The C2 domain maps to 637–776; the sequence is RKNEPLPKFH…ETKCEIHDTY (140 aa).

It belongs to the CC2D1 family. As to quaternary structure, interacts (via DM14 domains 1 and 3) with shrb; the interaction is direct and blocks access to the surface involved in shrb polymerization. This interaction may be required for the ESCRT-III complex role in multivesicular body formation.

The protein resides in the cytoplasm. Its subcellular location is the cytosol. The protein localises to the apicolateral cell membrane. It localises to the cell cortex. It is found in the endosome. Its function is as follows. Phosphatidyl inositol monophosphate binding protein involved in endosomal protein sorting through regulation of the endosomal sorting required for transport (ESCRT) pathway. Required for full activity of the ESCRT-III complex core component shrb/shrub, probably by preventing its inappropriate polymerisation. Required, but not essential, for the efficient generation of intraluminal vesicles (ILVs) in multivesicular bodies (MVBs). Involved in a late stage of the endosomal pathway targeting transmembrane proteins of the plasma membrane for lysosomal degradation. Plays a critical role in regulation of multiple signal transduction pathways, including the Notch and BMP/decapentaplegic (dpp) signaling pathways, through targeting of membrane bound receptors to multivesicular bodies, isolating them from the cytoplasm and targeting them for lysosomal degradation. Involved in targeting N/Notch for endosomal degradation, negatively regulating the Notch signaling pathway. Regulates Notch signaling in imaginal disk cells and follicle cells during oogenesis and multiple developmental processes, including development of wings, veins, legs, eyes and bristles. Restricts the activity of Notch to the dorsoventral (D/V) boundary of the wing imaginal disk. In external sensory organ development regulates Notch signaling during asymmetric cell division and differentiation of sensory organ precursor cells. May be involved in regulation of apoptosis and cell growth independent of Notch signaling. Involved in targeting tkv for endosomal degradation, negatively regulating the BMP/decapentaplegic (dpp) signaling pathway. Regulates the BMP/dpp signaling pathway in follicle cells during oogenesis, but not in imaginal disk cells during wing development. May be involved in differentiation or morphogenesis of peripodial epithelial cells in the developing imaginal disk. Involved in abscission of germline cells during oogenesis. This chain is Coiled-coil and C2 domain-containing protein 1-like, found in Drosophila melanogaster (Fruit fly).